The chain runs to 325 residues: Undecaprenyl-phosphate 4-deoxy-4-formamido-L-arabinose transferase (325 aa).

Helical transmembrane passes span 235–255 (LSVVGSVIAVSGFLLAVLLMV) and 269–291 (VFTLFALLFIFIGAQFVAMGLLG).

The protein belongs to the glycosyltransferase 2 family.

It is found in the cell inner membrane. The enzyme catalyses UDP-4-deoxy-4-formamido-beta-L-arabinose + di-trans,octa-cis-undecaprenyl phosphate = 4-deoxy-4-formamido-alpha-L-arabinopyranosyl di-trans,octa-cis-undecaprenyl phosphate + UDP. The protein operates within glycolipid biosynthesis; 4-amino-4-deoxy-alpha-L-arabinose undecaprenyl phosphate biosynthesis; 4-amino-4-deoxy-alpha-L-arabinose undecaprenyl phosphate from UDP-4-deoxy-4-formamido-beta-L-arabinose and undecaprenyl phosphate: step 1/2. It functions in the pathway bacterial outer membrane biogenesis; lipopolysaccharide biosynthesis. Catalyzes the transfer of 4-deoxy-4-formamido-L-arabinose from UDP to undecaprenyl phosphate. The modified arabinose is attached to lipid A and is required for resistance to polymyxin and cationic antimicrobial peptides. Essential for virulence in insects. The protein is Undecaprenyl-phosphate 4-deoxy-4-formamido-L-arabinose transferase of Photorhabdus laumondii subsp. laumondii (strain DSM 15139 / CIP 105565 / TT01) (Photorhabdus luminescens subsp. laumondii).